Here is a 199-residue protein sequence, read N- to C-terminus: Large ribosomal subunit protein bL25 (199 aa).

It belongs to the bacterial ribosomal protein bL25 family. CTC subfamily. Part of the 50S ribosomal subunit; part of the 5S rRNA/L5/L18/L25 subcomplex. Contacts the 5S rRNA. Binds to the 5S rRNA independently of L5 and L18.

Its function is as follows. This is one of the proteins that binds to the 5S RNA in the ribosome where it forms part of the central protuberance. The sequence is that of Large ribosomal subunit protein bL25 from Pelodictyon phaeoclathratiforme (strain DSM 5477 / BU-1).